Here is a 502-residue protein sequence, read N- to C-terminus: Smr domain-containing protein C1235.03 (502 aa).

Residues 150-184 (LITSNIGHRSRQRKKKTKKATNSRKPLSKFQSNTE) are disordered. Residues 157-171 (HRSRQRKKKTKKATN) are compositionally biased toward basic residues. In terms of domain architecture, Smr spans 411 to 459 (SLDLHGATVREAKTIVRERVAAWWAKEADTSPNSIRPFVIVTGRGNHSI).

It is found in the nucleus. Its subcellular location is the nucleolus. This is Smr domain-containing protein C1235.03 from Schizosaccharomyces pombe (strain 972 / ATCC 24843) (Fission yeast).